A 173-amino-acid polypeptide reads, in one-letter code: Galactose-6-phosphate isomerase subunit LacB (173 aa).

Belongs to the LacAB/RpiB family. Heteromultimeric protein consisting of LacA and LacB.

The catalysed reaction is aldehydo-D-galactose 6-phosphate = keto-D-tagatose 6-phosphate. Its pathway is carbohydrate metabolism; D-galactose 6-phosphate degradation; D-tagatose 6-phosphate from D-galactose 6-phosphate: step 1/1. The sequence is that of Galactose-6-phosphate isomerase subunit LacB from Clostridium acetobutylicum (strain ATCC 824 / DSM 792 / JCM 1419 / IAM 19013 / LMG 5710 / NBRC 13948 / NRRL B-527 / VKM B-1787 / 2291 / W).